Reading from the N-terminus, the 87-residue chain is Cell division topological specificity factor (87 aa).

Belongs to the MinE family.

In terms of biological role, prevents the cell division inhibition by proteins MinC and MinD at internal division sites while permitting inhibition at polar sites. This ensures cell division at the proper site by restricting the formation of a division septum at the midpoint of the long axis of the cell. The protein is Cell division topological specificity factor of Herpetosiphon aurantiacus (strain ATCC 23779 / DSM 785 / 114-95).